We begin with the raw amino-acid sequence, 370 residues long: DNA replication and repair protein RecF (370 aa).

Residue 30–37 (GENAQGKT) coordinates ATP.

The protein belongs to the RecF family. As to quaternary structure, recruited to foci following DNA damage; probably interacts with RecO.

Its subcellular location is the cytoplasm. It localises to the nucleoid. The RecF protein is involved in DNA metabolism; it is required for DNA replication and normal SOS inducibility. RecF binds preferentially to single-stranded, linear DNA. It also seems to bind ATP. Is recruited to repair centers, foci that are the site of double-strand DNA break(s) after RecN and RecO; recruitment may depend on RecO. A positive modulator of RecA. This Bacillus subtilis (strain 168) protein is DNA replication and repair protein RecF.